The following is a 181-amino-acid chain: Adenine phosphoribosyltransferase 1 (181 aa).

The protein belongs to the purine/pyrimidine phosphoribosyltransferase family. Homodimer.

Its subcellular location is the cytoplasm. The enzyme catalyses AMP + diphosphate = 5-phospho-alpha-D-ribose 1-diphosphate + adenine. It participates in purine metabolism; AMP biosynthesis via salvage pathway; AMP from adenine: step 1/1. Functionally, catalyzes a salvage reaction resulting in the formation of AMP, that is energically less costly than de novo synthesis. The sequence is that of Adenine phosphoribosyltransferase 1 (APT1) from Triticum aestivum (Wheat).